Consider the following 95-residue polypeptide: Large ribosomal subunit protein eL31 (95 aa).

The protein belongs to the eukaryotic ribosomal protein eL31 family. As to quaternary structure, part of the 50S ribosomal subunit.

The chain is Large ribosomal subunit protein eL31 from Pyrococcus furiosus (strain ATCC 43587 / DSM 3638 / JCM 8422 / Vc1).